We begin with the raw amino-acid sequence, 208 residues long: Adenylyl-sulfate kinase (208 aa).

35 to 42 (GLSGSGKS) lines the ATP pocket. Ser-109 (phosphoserine intermediate) is an active-site residue.

Belongs to the APS kinase family.

The enzyme catalyses adenosine 5'-phosphosulfate + ATP = 3'-phosphoadenylyl sulfate + ADP + H(+). It functions in the pathway sulfur metabolism; hydrogen sulfide biosynthesis; sulfite from sulfate: step 2/3. In terms of biological role, catalyzes the synthesis of activated sulfate. In Geotalea uraniireducens (strain Rf4) (Geobacter uraniireducens), this protein is Adenylyl-sulfate kinase.